Consider the following 213-residue polypeptide: Octanoyltransferase (213 aa).

Positions 28-203 constitute a BPL/LPL catalytic domain; it reads GTSPETLLLL…RFPFLLDERL (176 aa). Residues 66-73, 133-135, and 146-148 each bind substrate; these read RGGDVTFH, SIG, and GFA. The active-site Acyl-thioester intermediate is the Cys-164.

This sequence belongs to the LipB family.

It localises to the cytoplasm. The enzyme catalyses octanoyl-[ACP] + L-lysyl-[protein] = N(6)-octanoyl-L-lysyl-[protein] + holo-[ACP] + H(+). Its pathway is protein modification; protein lipoylation via endogenous pathway; protein N(6)-(lipoyl)lysine from octanoyl-[acyl-carrier-protein]: step 1/2. Its function is as follows. Catalyzes the transfer of endogenously produced octanoic acid from octanoyl-acyl-carrier-protein onto the lipoyl domains of lipoate-dependent enzymes. Lipoyl-ACP can also act as a substrate although octanoyl-ACP is likely to be the physiological substrate. This chain is Octanoyltransferase, found in Geobacter metallireducens (strain ATCC 53774 / DSM 7210 / GS-15).